Here is a 396-residue protein sequence, read N- to C-terminus: MAQDKFKRTKLHVNVGTIGHVDHGKTTLTAALTKVGAERFGGEFKAYDAIDAAPEEKARGITISTAHVEYETEVRHYAHVDCPGHADYVKNMITGAAQMDGAILVCSAADGPMPQTREHILLARQVGVPYIVVFLNKADMVDDAELLELVEMEVRELLSKYDFPGDDTPIVRGSALKALEGDQSEIGVPAIIRLAEALDTHIPNPERAIDRPFLMPVEDVFSISGRGTVVTGRIECGVIKVGDEVEIVGIRPTSKTIVTGVEMFRKLLDQGQAGDNAGLLLRGTKRDEVERGQVLAKPGCIKAHKEFEAEVYVLSKEEGGRHTPFFNGYTPQFYMRTTDITGKVCLPEGVEMVMPGDNVKVTVSLINPVAMGEGQRFAIREGGRTVGAGVVSKVIG.

In terms of domain architecture, tr-type G spans 10–206 (KLHVNVGTIG…ALDTHIPNPE (197 aa)). Residues 19 to 26 (GHVDHGKT) form a G1 region. Position 19–26 (19–26 (GHVDHGKT)) interacts with GTP. Mg(2+) is bound at residue threonine 26. Positions 60 to 64 (GITIS) are G2. A G3 region spans residues 81 to 84 (DCPG). GTP is bound by residues 81–85 (DCPGH) and 136–139 (NKAD). The tract at residues 136 to 139 (NKAD) is G4. Residues 174–176 (SAL) form a G5 region.

Belongs to the TRAFAC class translation factor GTPase superfamily. Classic translation factor GTPase family. EF-Tu/EF-1A subfamily. In terms of assembly, monomer.

It localises to the cytoplasm. It carries out the reaction GTP + H2O = GDP + phosphate + H(+). GTP hydrolase that promotes the GTP-dependent binding of aminoacyl-tRNA to the A-site of ribosomes during protein biosynthesis. The protein is Elongation factor Tu of Xylella fastidiosa (strain Temecula1 / ATCC 700964).